A 350-amino-acid polypeptide reads, in one-letter code: GDSL esterase/lipase At2g04570 (350 aa).

The first 23 residues, 1 to 23 (MGHLKSLFTILFLIAMSSTVTFA), serve as a signal peptide directing secretion. The active-site Nucleophile is the S35. N-linked (GlcNAc...) asparagine glycans are attached at residues N98 and N117. Active-site residues include D325 and H328. N343 carries N-linked (GlcNAc...) asparagine glycosylation.

It belongs to the 'GDSL' lipolytic enzyme family.

The protein localises to the secreted. This is GDSL esterase/lipase At2g04570 from Arabidopsis thaliana (Mouse-ear cress).